A 255-amino-acid chain; its full sequence is Flap endonuclease Xni (255 aa).

D105 is a Mg(2+) binding site. Residues 162–253 enclose the 5'-3' exonuclease domain; it reads EHSQFIDYLA…NLSQFRLPNP (92 aa). The K(+) site is built by L172, A173, P181, V183, and I186. Residues 185 to 190 form an interaction with DNA region; the sequence is GIGPKS.

This sequence belongs to the Xni family. Requires Mg(2+) as cofactor. K(+) is required as a cofactor.

In terms of biological role, has flap endonuclease activity. During DNA replication, flap endonucleases cleave the 5'-overhanging flap structure that is generated by displacement synthesis when DNA polymerase encounters the 5'-end of a downstream Okazaki fragment. The sequence is that of Flap endonuclease Xni from Shewanella sediminis (strain HAW-EB3).